The following is a 2569-amino-acid chain: Highly reducing polyketide synthase pks5 (2569 aa).

A disordered region spans residues 1–25; sequence MVVKFANGVRNRGNGDEGQRGTQRP. Residues 27–452 form the Ketosynthase family 3 (KS3) domain; it reads STPIAIVGMS…GTNVHVIMEA (426 aa). Residues Cys-200, His-335, and His-375 each act as for beta-ketoacyl synthase activity in the active site. The segment at 572-892 is malonyl-CoA:ACP transacylase (MAT) domain; it reads IFNGQGAQWY…PYLSCLRRNI (321 aa). Residues 960–1097 form an N-terminal hotdog fold region; the sequence is HELLGSSVPG…GYVSAEDSSK (138 aa). Positions 960-1268 are dehydratase (DH) domain; it reads HELLGSSVPG…LRLQKIQAED (309 aa). A PKS/mFAS DH domain is found at 960-1270; sequence HELLGSSVPG…LQKIQAEDDN (311 aa). His-992 acts as the Proton acceptor; for dehydratase activity in catalysis. The C-terminal hotdog fold stretch occupies residues 1117 to 1270; sequence RVRHVRPDAM…LQKIQAEDDN (154 aa). Residue Asp-1179 is the Proton donor; for dehydratase activity of the active site. The methyltransferase (CMet) domain stretch occupies residues 1457–1567; that stretch reads LEVGAGTGGA…RKLLKPKGKL (111 aa). Residues 1855–2170 are enoyl reductase (ER) domain; that stretch reads DLLNKIEFLE…SGTHMGKIVL (316 aa). The ketoreductase (KR) domain stretch occupies residues 2195–2371; it reads THLIVGGLRG…AISINLGPVD (177 aa). Residues 2485-2562 enclose the Carrier domain; that stretch reads AARKLVSELI…DFAALVASRS (78 aa). At Ser-2522 the chain carries O-(pantetheine 4'-phosphoryl)serine.

Highly reducing polyketide synthase; part of the gene cluster that mediates the biosynthesis of abscisic acid (ABA), a phytohormone that acts antagonistically toward salicylic acid (SA), jasmonic acid (JA) and ethylene (ETH) signaling, to impede plant defense responses. The first step of the pathway catalyzes the reaction from farnesyl diphosphate to alpha-ionylideneethane performed by the alpha-ionylideneethane synthase abl3 via a three-step reaction mechanism involving 2 neutral intermediates, beta-farnesene and allofarnesene. The cytochrome P450 monooxygenase abl1 might then be involved in the conversion of alpha-ionylideneethane to alpha-ionylideneacetic acid. Alpha-ionylideneacetic acid is further converted to abscisic acid in 2 steps involving the cytochrome P450 monooxygenase abl2 and the short-chain dehydrogenase/reductase abl4, via the intermediates 1'-deoxy-ABA or 1',4'-trans-diol-ABA, depending on the order of action of these 2 enzymes. Abl2 is responsible for the hydroxylation of carbon atom C-1' and abl4 might be involved in the oxidation of the C-4' carbon atom. Pks5 is clearly not involved in the production of ABA. Nonetheless, the possibility cannot be excluded that pks5 may modify ABA into another compound. It also cannot be excluded the possibility that pks5 also has a function completely independent of ABA synthesis. Pks5 is not required for pathogenicity on B.napus cotyledon. The protein is Highly reducing polyketide synthase pks5 of Leptosphaeria maculans (strain JN3 / isolate v23.1.3 / race Av1-4-5-6-7-8) (Blackleg fungus).